A 142-amino-acid polypeptide reads, in one-letter code: MAKRVAAIVKLQVPAGKATPAPPVGPALGQHGVNIMAFVKEYNERTAAQAGLIIPVEITVYEDRSFTFVTKTPPAAVLLKKAAGLETASGEPNKKKVAKLPRSKVKEIAELKMPDLNAASIEAAMRMIEGTARSMGIDIVEG.

This sequence belongs to the universal ribosomal protein uL11 family. As to quaternary structure, part of the ribosomal stalk of the 50S ribosomal subunit. Interacts with L10 and the large rRNA to form the base of the stalk. L10 forms an elongated spine to which L12 dimers bind in a sequential fashion forming a multimeric L10(L12)X complex. One or more lysine residues are methylated.

Forms part of the ribosomal stalk which helps the ribosome interact with GTP-bound translation factors. The sequence is that of Large ribosomal subunit protein uL11 from Pelotomaculum thermopropionicum (strain DSM 13744 / JCM 10971 / SI).